A 227-amino-acid chain; its full sequence is UPF0758 protein Rxyl_1530 (227 aa).

Residues 106–227 (VISSPADVDG…YFSMKEHGML (122 aa)) enclose the MPN domain. Zn(2+)-binding residues include His177, His179, and Asp190. Positions 177–190 (HNHPSGRVEPSRED) match the JAMM motif motif.

Belongs to the UPF0758 family.

The chain is UPF0758 protein Rxyl_1530 from Rubrobacter xylanophilus (strain DSM 9941 / JCM 11954 / NBRC 16129 / PRD-1).